We begin with the raw amino-acid sequence, 505 residues long: Trans-cinnamate 4-monooxygenase (505 aa).

Residues 3–23 (LLLLEKTLLGSFVAILVAILV) traverse the membrane as a helical segment. Residues 213–218 (RSRLAQ) and alanine 306 each bind (E)-cinnamate. Cysteine 447 is a binding site for heme.

This sequence belongs to the cytochrome P450 family. It depends on heme as a cofactor.

It localises to the membrane. The catalysed reaction is (E)-cinnamate + reduced [NADPH--hemoprotein reductase] + O2 = (E)-4-coumarate + oxidized [NADPH--hemoprotein reductase] + H2O + H(+). The protein operates within phenylpropanoid metabolism; trans-4-coumarate biosynthesis; trans-4-coumarate from trans-cinnamate: step 1/1. In terms of biological role, catalyzes the first oxidative step of the phenylpropanoid pathway in higher plants by transforming trans-cinnamate into p-coumarate. The compounds formed by this pathway are essential components for lignification, pollination, and defense against ultraviolet light, predators and pathogens. The sequence is that of Trans-cinnamate 4-monooxygenase (CYP73A13) from Populus tremuloides (Quaking aspen).